The following is a 523-amino-acid chain: NADH-ubiquinone oxidoreductase chain 4 (523 aa).

14 helical membrane-spanning segments follow: residues 22-42 (FFIM…AIAL), 62-82 (LLTF…SALF), 120-140 (ISLF…LVSW), 149-169 (EYCI…SVLD), 170-190 (LLLF…IIGV), 204-224 (FFLY…LIYF), 246-266 (ILWL…PVHI), 276-296 (PTAG…YGFL), 303-323 (FPYA…IAIV), 338-358 (IIAY…FSQN), 366-386 (ILLM…VGVL), 404-424 (TMPI…SLPG), 444-464 (FVAF…LWLC), and 488-508 (FFMF…PEPF).

It belongs to the complex I subunit 4 family.

Its subcellular location is the mitochondrion membrane. It carries out the reaction a ubiquinone + NADH + 5 H(+)(in) = a ubiquinol + NAD(+) + 4 H(+)(out). Functionally, core subunit of the mitochondrial membrane respiratory chain NADH dehydrogenase (Complex I) that is believed to belong to the minimal assembly required for catalysis. Complex I functions in the transfer of electrons from NADH to the respiratory chain. The immediate electron acceptor for the enzyme is believed to be ubiquinone. This Prototheca wickerhamii protein is NADH-ubiquinone oxidoreductase chain 4 (ND4).